The sequence spans 482 residues: MTTAIQEQQNSAAPTAAGRVVRVIGPVVDVEFPRGQQPALFNALHVEVDLEAVAKTITLEVAQHLGDNLVRTVSMAPTDGLVRGAEVKDTGKPISVPVGDVVKGHVFNALGDCLDEPGLGRDGEQWGIHREPPAFDELEGKTEILETGVKVIDLLTPYVKGGKIGLFGGAGVGKTVLIQEMITRIAREFSGTSVFAGVGERTREGTDLFLEMEEMGVLQDTALVFGQMDEPPGVRMRVALSGLTMAEYFRDVQGQDVLLFIDNIFRFTQAGSEVSTLLGRMPSAVGYQPTLADEMGVLQERITSTKGKSITSLQAVYVPADDYTDPAPATTFAHLDATTELDRAIASKGIYPAVNPLTSTSRILEPGIVGEKHYEVAQRVINILQKNKELQDIIAILGMDELSEEDKITVQRARRIERFLGQNFFVAEKFTGIPGSFVPLEETIDAFERICDGEFDAYPEQAFNGLGGLDDVEAAYKKLTDK.

Position 168–175 (168–175 (GGAGVGKT)) interacts with ATP.

The protein belongs to the ATPase alpha/beta chains family. F-type ATPases have 2 components, CF(1) - the catalytic core - and CF(0) - the membrane proton channel. CF(1) has five subunits: alpha(3), beta(3), gamma(1), delta(1), epsilon(1). CF(0) has three main subunits: a(1), b(2) and c(9-12). The alpha and beta chains form an alternating ring which encloses part of the gamma chain. CF(1) is attached to CF(0) by a central stalk formed by the gamma and epsilon chains, while a peripheral stalk is formed by the delta and b chains.

It localises to the cell membrane. It catalyses the reaction ATP + H2O + 4 H(+)(in) = ADP + phosphate + 5 H(+)(out). Functionally, produces ATP from ADP in the presence of a proton gradient across the membrane. The catalytic sites are hosted primarily by the beta subunits. The polypeptide is ATP synthase subunit beta (Corynebacterium urealyticum (strain ATCC 43042 / DSM 7109)).